Consider the following 586-residue polypeptide: Homothallic switching endonuclease (586 aa).

The DOD-type homing endonuclease domain occupies 215-370; the sequence is MLGLWLGDST…IVHISRSLGM (156 aa).

In terms of processing, rapidly degraded via the ubiquitin-26S proteasome system through two ubiquitin-conjugating enzymes UBC2/RAD6 and UBC3/CDC34.

The protein localises to the nucleus. In terms of biological role, initiation of mating type interconversion. This protein is a site-specific endonuclease that cleaves a site in the mat locus on chromosome III. The double-strand break is followed by a unidirectional gene conversion event that replaces the information at the mat locus by information copied from either of the two homologous loci (HMR and HML) that reside at the extremity of the chromosome III. Endonuclease expression takes place in late G1 just before cells enter S phase. This is Homothallic switching endonuclease (HO) from Saccharomyces cerevisiae (strain ATCC 204508 / S288c) (Baker's yeast).